The primary structure comprises 466 residues: UDP-glycosyltransferase 91B1 (466 aa).

Residues Thr286, 342–344 (VPQ), 359–367 (HCGWGSAVE), and 381–384 (NLDQ) contribute to the UDP-alpha-D-glucose site.

The protein belongs to the UDP-glycosyltransferase family.

This is UDP-glycosyltransferase 91B1 (UGT91B1) from Arabidopsis thaliana (Mouse-ear cress).